A 450-amino-acid chain; its full sequence is Phosphoglucosamine mutase (450 aa).

Catalysis depends on serine 101, which acts as the Phosphoserine intermediate. The Mg(2+) site is built by serine 101, aspartate 241, aspartate 243, and aspartate 245. Serine 101 is subject to Phosphoserine.

It belongs to the phosphohexose mutase family. Mg(2+) is required as a cofactor. Post-translationally, activated by phosphorylation.

It carries out the reaction alpha-D-glucosamine 1-phosphate = D-glucosamine 6-phosphate. Catalyzes the conversion of glucosamine-6-phosphate to glucosamine-1-phosphate. The protein is Phosphoglucosamine mutase of Lysinibacillus sphaericus (strain C3-41).